Consider the following 206-residue polypeptide: High-affinity nitrate transporter-activating protein 2.1 (206 aa).

A signal peptide spans 1–27; the sequence is MARLAGVAALSLVLVLLGAGVPRPAAA. Residues 180–200 form a helical membrane-spanning segment; that stretch reads VAAGVFSTFSIAALAFFFVVE.

Belongs to the NAR2 family. In terms of assembly, heterotetramer composed of two NRT2.1, NRT2.2 or NRT2.3 and two NAR2.1. Interacts with NRT2.1, NRT2.2 and isoform 1 of NRT2.3. In terms of tissue distribution, expressed in epidermal cells of primary and lateral roots, root-shoot junction zone, vascular tissues of adventitious root primordia, stems and coleoptiles of germinating seeds.

The protein resides in the cell membrane. Its function is as follows. Acts as a dual component transporter with NTR2.1, NRT2.2 and NRT2.3. Required for high-affinity nitrate transport. Involved in the regulation of NRT2.1, NRT2.2 and NRT2.3 expression, and in both, HATS (high-affinity transport system) and LATS (low-affinity transport system) activities in plant roots. Imports nitrate with high affinity when expressed with NTR2.1, NTR2.2 or NTR2.3 in a heterologous system (Xenopus oocytes). The polypeptide is High-affinity nitrate transporter-activating protein 2.1 (NAR2.1) (Oryza sativa subsp. japonica (Rice)).